Consider the following 331-residue polypeptide: Phosphate acyltransferase (331 aa).

The protein belongs to the PlsX family. In terms of assembly, homodimer. Probably interacts with PlsY.

It localises to the cytoplasm. It carries out the reaction a fatty acyl-[ACP] + phosphate = an acyl phosphate + holo-[ACP]. It functions in the pathway lipid metabolism; phospholipid metabolism. In terms of biological role, catalyzes the reversible formation of acyl-phosphate (acyl-PO(4)) from acyl-[acyl-carrier-protein] (acyl-ACP). This enzyme utilizes acyl-ACP as fatty acyl donor, but not acyl-CoA. In Exiguobacterium sibiricum (strain DSM 17290 / CCUG 55495 / CIP 109462 / JCM 13490 / 255-15), this protein is Phosphate acyltransferase.